Consider the following 227-residue polypeptide: UPF0173 metal-dependent hydrolase Tlet_1100 (227 aa).

This sequence belongs to the UPF0173 family.

The polypeptide is UPF0173 metal-dependent hydrolase Tlet_1100 (Pseudothermotoga lettingae (strain ATCC BAA-301 / DSM 14385 / NBRC 107922 / TMO) (Thermotoga lettingae)).